Reading from the N-terminus, the 319-residue chain is GATA transcription factor 18 (319 aa).

A compositionally biased stretch (low complexity) spans 1–15; it reads MPDAAAAAAAAQDAD. The disordered stretch occupies residues 1–74; sequence MPDAAAAAAA…AAPEPVSALL (74 aa). The segment covering 32–60 has biased composition (acidic residues); sequence NNDDDGDDGTEEDEEEDDDEEGDEEELPP. Residues 74 to 109 enclose the Tify domain; that stretch reads LPGSPNQLTLLFQGEVYVFESVTPEKVQAVLLLLGS. The CCT domain occupies 143–185; it reads RVASLIRFREKRKERNFDKKIRYAVRKEVALRMQRRKGQFAGR. Residues 215–242 form a GATA-type zinc finger; it reads CQNCGTSEKMTPAMRRGPAGPRTLCNAC. Residues 292 to 319 form a disordered region; sequence ITASHGEVMGDSTPANEAEIGAPKAQSQ.

This sequence belongs to the type IV zinc-finger family. Class C subfamily.

The protein localises to the nucleus. Its function is as follows. Transcriptional activator that specifically binds 5'-GATA-3' or 5'-GAT-3' motifs within gene promoters. The polypeptide is GATA transcription factor 18 (Oryza sativa subsp. indica (Rice)).